The sequence spans 211 residues: Porin MspA (211 aa).

Positions 1–27 are cleaved as a signal peptide; the sequence is MKAISRVLIAMVAAIAALFTSTGTSHA.

Belongs to the mycobacterial porin (TC 1.B.24) family. Forms very stable octamers. Isolated as a 100 kDa complex that can be reduced to monomers upon boiling in 80% dimethyl sulfoxide for 15 minutes. Structures show a goblet with the wide end on the exterior of the outer membrane and a central channel. It is not known if mixed oligomers of MspA with other Msp subunits form in vivo.

Its subcellular location is the cell outer membrane. It localises to the secreted. The protein localises to the cell wall. Its function is as follows. The major porin in this organism, forms a water-filled channel which favors the permeation of cations, amino acids, iron Fe(3+) and less efficiently phosphate. Does not transport Fe-ExoMS, the predominant siderophore. Plays a role in transport of beta-lactamase and hydrophilic fluoroquinolone antibiotics such as norfloxacin as well as chloramphenicol. There are about 2400 porins in wild-type, 800 in an mspA deletion and 150 in a double mspA-mspC deletion. Different conductance values with maxima at 2.3 and 4.6 nanosiemens might be caused by a simultaneous reconstitution of MspA channels into the membrane or by the existence of different MspA conformations. The sequence is that of Porin MspA (mspA) from Mycolicibacterium smegmatis (strain ATCC 700084 / mc(2)155) (Mycobacterium smegmatis).